We begin with the raw amino-acid sequence, 284 residues long: tRNA-cytidine(32) 2-sulfurtransferase (284 aa).

The short motif at 44-49 is the PP-loop motif element; the sequence is SGGKDS. Residues C119, C122, and C210 each coordinate [4Fe-4S] cluster.

It belongs to the TtcA family. Homodimer. Mg(2+) is required as a cofactor. The cofactor is [4Fe-4S] cluster.

It is found in the cytoplasm. It catalyses the reaction cytidine(32) in tRNA + S-sulfanyl-L-cysteinyl-[cysteine desulfurase] + AH2 + ATP = 2-thiocytidine(32) in tRNA + L-cysteinyl-[cysteine desulfurase] + A + AMP + diphosphate + H(+). Its pathway is tRNA modification. Catalyzes the ATP-dependent 2-thiolation of cytidine in position 32 of tRNA, to form 2-thiocytidine (s(2)C32). The sulfur atoms are provided by the cysteine/cysteine desulfurase (IscS) system. The chain is tRNA-cytidine(32) 2-sulfurtransferase from Chromohalobacter salexigens (strain ATCC BAA-138 / DSM 3043 / CIP 106854 / NCIMB 13768 / 1H11).